We begin with the raw amino-acid sequence, 618 residues long: MKTVSTSDRLAELRGLMRARSIDVYIVPTEDAHSSEYIAPCDGRREFISGFSGSAGTAVVTNDKAALATDGRYFNQAATELDNNWELLKQGQPDVPTWQEWTADQAAGGKTVGVDPTLLSSSEAKALQEKIKSKGGNDLVAISDNLVDLVWGRHKPSRPSNPIAFLPKKYSGKDTEPKLKELREVLEKKKVFGFVISTLDEIAWLFNLRGSDIPYNPVFFSYAVVTADNATLYVDASKLSEESHAYLKENKVDIRPYESIFEDSEVLAKSLKPTEDQGEESKVKKLAISNKTSWALKLALGGDGAVDEIKSPVCDAKAIKNETELEGMRQCHIRDGAALIEYFAWLEDQVANKKATLNEVQAATKLENLRAKHEDFVGLSFTTISAVGANAAVIHYKPEEDSCATIDADSVYLCDSGAQFLDGTTDTTRTLHFGKPSEAERKAYTLVLKGNMALDMAIFPKGTTGFALDPFARQFLWQEGLDYRHGTGHGVGSYLNVHEGPIGIGTRKHYAGVPLAPGNVTSIEPGFYEDGSYGIRIENIAMIREVETKHMFGDKPYLGFEHVTMVPYCRRLIDESLLTPREKQWLNDYNKLILDKTSGFFKDDNLTMAWLERETQPY.

Mn(2+) is bound by residues D415, D426, E524, and E538.

This sequence belongs to the peptidase M24B family. Mn(2+) serves as cofactor.

The catalysed reaction is Release of any N-terminal amino acid, including proline, that is linked to proline, even from a dipeptide or tripeptide.. Catalyzes the removal of a penultimate prolyl residue from the N-termini of peptides. The polypeptide is Probable Xaa-Pro aminopeptidase P (AMPP) (Pyricularia oryzae (strain 70-15 / ATCC MYA-4617 / FGSC 8958) (Rice blast fungus)).